Consider the following 43-residue polypeptide: Protein PsbN (43 aa).

A helical transmembrane segment spans residues valine 7–glutamine 29.

Belongs to the PsbN family.

It is found in the plastid. It localises to the chloroplast thylakoid membrane. In terms of biological role, may play a role in photosystem I and II biogenesis. The polypeptide is Protein PsbN (Draba nemorosa (Woodland whitlowgrass)).